Consider the following 311-residue polypeptide: Putative HTH-type transcriptional regulatory protein MTH_967 (311 aa).

The HTH cro/C1-type domain maps to 134–192 (LREVREEYNLSLKDLADLAHVSRKTIYKYENGLARASAETAMILEEILNIRITLSIDIF). Positions 145–164 (LKDLADLAHVSRKTIYKYEN) form a DNA-binding region, H-T-H motif.

The chain is Putative HTH-type transcriptional regulatory protein MTH_967 from Methanothermobacter thermautotrophicus (strain ATCC 29096 / DSM 1053 / JCM 10044 / NBRC 100330 / Delta H) (Methanobacterium thermoautotrophicum).